The following is a 529-amino-acid chain: Bifunctional purine biosynthesis protein PurH (529 aa).

Residues 1–148 (MQQPRPIRRA…KNHKDVAIVV (148 aa)) form the MGS-like domain.

This sequence belongs to the PurH family.

It catalyses the reaction (6R)-10-formyltetrahydrofolate + 5-amino-1-(5-phospho-beta-D-ribosyl)imidazole-4-carboxamide = 5-formamido-1-(5-phospho-D-ribosyl)imidazole-4-carboxamide + (6S)-5,6,7,8-tetrahydrofolate. The enzyme catalyses IMP + H2O = 5-formamido-1-(5-phospho-D-ribosyl)imidazole-4-carboxamide. The protein operates within purine metabolism; IMP biosynthesis via de novo pathway; 5-formamido-1-(5-phospho-D-ribosyl)imidazole-4-carboxamide from 5-amino-1-(5-phospho-D-ribosyl)imidazole-4-carboxamide (10-formyl THF route): step 1/1. It functions in the pathway purine metabolism; IMP biosynthesis via de novo pathway; IMP from 5-formamido-1-(5-phospho-D-ribosyl)imidazole-4-carboxamide: step 1/1. This Serratia proteamaculans (strain 568) protein is Bifunctional purine biosynthesis protein PurH.